Reading from the N-terminus, the 375-residue chain is Succinyl-diaminopimelate desuccinylase (375 aa).

H66 lines the Zn(2+) pocket. The active site involves D68. Position 99 (D99) interacts with Zn(2+). E133 functions as the Proton acceptor in the catalytic mechanism. Zn(2+) is bound by residues E134, E162, and H348.

This sequence belongs to the peptidase M20A family. DapE subfamily. In terms of assembly, homodimer. Requires Zn(2+) as cofactor. Co(2+) is required as a cofactor.

It catalyses the reaction N-succinyl-(2S,6S)-2,6-diaminopimelate + H2O = (2S,6S)-2,6-diaminopimelate + succinate. The protein operates within amino-acid biosynthesis; L-lysine biosynthesis via DAP pathway; LL-2,6-diaminopimelate from (S)-tetrahydrodipicolinate (succinylase route): step 3/3. Its function is as follows. Catalyzes the hydrolysis of N-succinyl-L,L-diaminopimelic acid (SDAP), forming succinate and LL-2,6-diaminopimelate (DAP), an intermediate involved in the bacterial biosynthesis of lysine and meso-diaminopimelic acid, an essential component of bacterial cell walls. This is Succinyl-diaminopimelate desuccinylase from Alkalilimnicola ehrlichii (strain ATCC BAA-1101 / DSM 17681 / MLHE-1).